A 58-amino-acid polypeptide reads, in one-letter code: Small ribosomal subunit protein bS21 (58 aa).

This sequence belongs to the bacterial ribosomal protein bS21 family.

The chain is Small ribosomal subunit protein bS21 from Streptococcus pyogenes serotype M49 (strain NZ131).